The sequence spans 82 residues: MSFWDYFRSNKQATASVAKERLQIIVAHERSQRNQPDYLPQLQQEILEVIGKYVKINREDIQVQIDRNDDCAVLELNITLPE.

This sequence belongs to the MinE family.

In terms of biological role, prevents the cell division inhibition by proteins MinC and MinD at internal division sites while permitting inhibition at polar sites. This ensures cell division at the proper site by restricting the formation of a division septum at the midpoint of the long axis of the cell. This Hahella chejuensis (strain KCTC 2396) protein is Cell division topological specificity factor.